The sequence spans 285 residues: Polyamine aminopropyltransferase (285 aa).

The region spanning 5-241 is the PABS domain; that stretch reads DTWFTEHFQT…GWWSVTLSSK (237 aa). Residue Gln35 coordinates S-methyl-5'-thioadenosine. Spermidine-binding residues include His66 and Asp90. Residues Asp110 and 141 to 142 each bind S-methyl-5'-thioadenosine; that span reads DG. Residue Asp160 is the Proton acceptor of the active site. Position 160-163 (160-163) interacts with spermidine; it reads DSTD. Pro167 is a binding site for S-methyl-5'-thioadenosine.

Belongs to the spermidine/spermine synthase family. In terms of assembly, homodimer or homotetramer.

It is found in the cytoplasm. The catalysed reaction is S-adenosyl 3-(methylsulfanyl)propylamine + putrescine = S-methyl-5'-thioadenosine + spermidine + H(+). It functions in the pathway amine and polyamine biosynthesis; spermidine biosynthesis; spermidine from putrescine: step 1/1. Its function is as follows. Catalyzes the irreversible transfer of a propylamine group from the amino donor S-adenosylmethioninamine (decarboxy-AdoMet) to putrescine (1,4-diaminobutane) to yield spermidine. The sequence is that of Polyamine aminopropyltransferase from Xylella fastidiosa (strain Temecula1 / ATCC 700964).